The sequence spans 272 residues: 3-methyl-2-oxobutanoate hydroxymethyltransferase (272 aa).

Mg(2+) is bound by residues Asp-53 and Asp-92. 3-methyl-2-oxobutanoate-binding positions include 53–54 (DS), Asp-92, and Lys-120. A Mg(2+)-binding site is contributed by Glu-122. Glu-189 serves as the catalytic Proton acceptor.

It belongs to the PanB family. Homodecamer; pentamer of dimers. It depends on Mg(2+) as a cofactor.

The protein localises to the cytoplasm. The catalysed reaction is 3-methyl-2-oxobutanoate + (6R)-5,10-methylene-5,6,7,8-tetrahydrofolate + H2O = 2-dehydropantoate + (6S)-5,6,7,8-tetrahydrofolate. Its pathway is cofactor biosynthesis; (R)-pantothenate biosynthesis; (R)-pantoate from 3-methyl-2-oxobutanoate: step 1/2. In terms of biological role, catalyzes the reversible reaction in which hydroxymethyl group from 5,10-methylenetetrahydrofolate is transferred onto alpha-ketoisovalerate to form ketopantoate. The polypeptide is 3-methyl-2-oxobutanoate hydroxymethyltransferase (Ralstonia pickettii (strain 12J)).